We begin with the raw amino-acid sequence, 239 residues long: Enolase-phosphatase E1 (239 aa).

This sequence belongs to the HAD-like hydrolase superfamily. MasA/MtnC family. In terms of assembly, monomer. Mg(2+) serves as cofactor.

The catalysed reaction is 5-methylsulfanyl-2,3-dioxopentyl phosphate + H2O = 1,2-dihydroxy-5-(methylsulfanyl)pent-1-en-3-one + phosphate. It functions in the pathway amino-acid biosynthesis; L-methionine biosynthesis via salvage pathway; L-methionine from S-methyl-5-thio-alpha-D-ribose 1-phosphate: step 3/6. Its pathway is amino-acid biosynthesis; L-methionine biosynthesis via salvage pathway; L-methionine from S-methyl-5-thio-alpha-D-ribose 1-phosphate: step 4/6. Its function is as follows. Bifunctional enzyme that catalyzes the enolization of 2,3-diketo-5-methylthiopentyl-1-phosphate (DK-MTP-1-P) into the intermediate 2-hydroxy-3-keto-5-methylthiopentenyl-1-phosphate (HK-MTPenyl-1-P), which is then dephosphorylated to form the acireductone 1,2-dihydroxy-3-keto-5-methylthiopentene (DHK-MTPene). This is Enolase-phosphatase E1 from Streptomyces avermitilis (strain ATCC 31267 / DSM 46492 / JCM 5070 / NBRC 14893 / NCIMB 12804 / NRRL 8165 / MA-4680).